Here is a 311-residue protein sequence, read N- to C-terminus: tRNA-cytidine(32) 2-sulfurtransferase (311 aa).

A PP-loop motif motif is present at residues 47-52 (SGGKDS). Positions 122, 125, and 213 each coordinate [4Fe-4S] cluster.

Belongs to the TtcA family. As to quaternary structure, homodimer. It depends on Mg(2+) as a cofactor. [4Fe-4S] cluster serves as cofactor.

It is found in the cytoplasm. The catalysed reaction is cytidine(32) in tRNA + S-sulfanyl-L-cysteinyl-[cysteine desulfurase] + AH2 + ATP = 2-thiocytidine(32) in tRNA + L-cysteinyl-[cysteine desulfurase] + A + AMP + diphosphate + H(+). It participates in tRNA modification. In terms of biological role, catalyzes the ATP-dependent 2-thiolation of cytidine in position 32 of tRNA, to form 2-thiocytidine (s(2)C32). The sulfur atoms are provided by the cysteine/cysteine desulfurase (IscS) system. The sequence is that of tRNA-cytidine(32) 2-sulfurtransferase from Escherichia coli O7:K1 (strain IAI39 / ExPEC).